A 388-amino-acid polypeptide reads, in one-letter code: Flap endonuclease 1 (388 aa).

Residues 1–104 are N-domain; sequence MGILGLSKLI…GELAKRAERR (104 aa). Position 34 (D34) interacts with Mg(2+). 2 residues coordinate DNA: R47 and R70. D86, E158, E160, D179, and D181 together coordinate Mg(2+). Positions 122 to 253 are I-domain; that stretch reads QIEKFNRRLV…KRAIELIKSY (132 aa). Residue E158 participates in DNA binding. Residues G231 and D233 each contribute to the DNA site. Residue D233 participates in Mg(2+) binding. The tract at residues 336–344 is interaction with PCNA; sequence TQVRLDSFF. Residues 355 to 388 are disordered; sequence AAAKRKAEESKKSANSKKAKIGGGSGAGRGRRPK.

Belongs to the XPG/RAD2 endonuclease family. FEN1 subfamily. Interacts with PCNA. Three molecules of FEN1 bind to one PCNA trimer with each molecule binding to one PCNA monomer. PCNA stimulates the nuclease activity without altering cleavage specificity. Mg(2+) is required as a cofactor. Phosphorylated. Phosphorylation upon DNA damage induces relocalization to the nuclear plasma.

The protein localises to the nucleus. Its subcellular location is the nucleolus. The protein resides in the nucleoplasm. It is found in the mitochondrion. Functionally, structure-specific nuclease with 5'-flap endonuclease and 5'-3' exonuclease activities involved in DNA replication and repair. During DNA replication, cleaves the 5'-overhanging flap structure that is generated by displacement synthesis when DNA polymerase encounters the 5'-end of a downstream Okazaki fragment. It enters the flap from the 5'-end and then tracks to cleave the flap base, leaving a nick for ligation. Also involved in the long patch base excision repair (LP-BER) pathway, by cleaving within the apurinic/apyrimidinic (AP) site-terminated flap. Acts as a genome stabilization factor that prevents flaps from equilibrating into structures that lead to duplications and deletions. Also possesses 5'-3' exonuclease activity on nicked or gapped double-stranded DNA, and exhibits RNase H activity. Also involved in replication and repair of rDNA and in repairing mitochondrial DNA. The sequence is that of Flap endonuclease 1 from Drosophila grimshawi (Hawaiian fruit fly).